We begin with the raw amino-acid sequence, 159 residues long: MKKPYFVSITLFITIAVLILDQVTKAVIAKSMAIGDSYTVIPKFLYITSHRNNGAAWGILSGRMSFFFIVTIVVLGLLVFFYIKEAKGNFLMQVAISLLFAGALGNFIDRMLHGEVVDFIDTKIFSYDFPIFNGADSSLTIGVILVLIALLFDSRKSKV.

The next 3 helical transmembrane spans lie at 4 to 24 (PYFV…DQVT), 64 to 84 (MSFF…FYIK), and 88 to 108 (GNFL…GNFI). Residues Asp-118 and Asp-136 contribute to the active site. Residues 131-151 (IFNGADSSLTIGVILVLIALL) form a helical membrane-spanning segment.

It belongs to the peptidase A8 family.

The protein localises to the cell membrane. It catalyses the reaction Release of signal peptides from bacterial membrane prolipoproteins. Hydrolyzes -Xaa-Yaa-Zaa-|-(S,diacylglyceryl)Cys-, in which Xaa is hydrophobic (preferably Leu), and Yaa (Ala or Ser) and Zaa (Gly or Ala) have small, neutral side chains.. The protein operates within protein modification; lipoprotein biosynthesis (signal peptide cleavage). Its function is as follows. This protein specifically catalyzes the removal of signal peptides from prolipoproteins. The protein is Lipoprotein signal peptidase of Staphylococcus carnosus (strain TM300).